A 61-amino-acid polypeptide reads, in one-letter code: Small ribosomal subunit protein uS14 (61 aa).

Positions 24, 27, 40, and 43 each coordinate Zn(2+).

This sequence belongs to the universal ribosomal protein uS14 family. Zinc-binding uS14 subfamily. Part of the 30S ribosomal subunit. Contacts proteins S3 and S10. Zn(2+) serves as cofactor.

In terms of biological role, binds 16S rRNA, required for the assembly of 30S particles and may also be responsible for determining the conformation of the 16S rRNA at the A site. This is Small ribosomal subunit protein uS14 from Mycoplasmopsis agalactiae (strain NCTC 10123 / CIP 59.7 / PG2) (Mycoplasma agalactiae).